The sequence spans 399 residues: Transaminase BacF (399 aa).

Pyridoxal 5'-phosphate contacts are provided by residues 103–104 (GK), Tyr128, Asn178, Tyr209, and 236–238 (SFS). Position 239 is an N6-(pyridoxal phosphate)lysine (Lys239). Arg247 contributes to the pyridoxal 5'-phosphate binding site.

Belongs to the class-I pyridoxal-phosphate-dependent aminotransferase family. Homodimer. The cofactor is pyridoxal 5'-phosphate.

The protein resides in the cytoplasm. Its pathway is antibiotic biosynthesis; bacilysin biosynthesis. Functionally, part of the bacABCDEF operon responsible for the biosynthesis of the nonribosomally synthesized dipeptide antibiotic bacilysin, composed of L-alanine and L-anticapsin. Bacilysin is an irreversible inactivator of the glutaminase domain of glucosamine synthetase. Catalyzes the reductive amination of the C2 ketone of tetrahydro-hydroxyphenylpyruvate (H4HPP), with L-Phe as an amino donor, to yield tetrahydrotyrosine (H4Tyr) diastereomer. D-Phe is not an effective amino donor. BacF associated to BacG converts 3E,7R- and 3Z,7R-ex-H2HPP to 2S,4R,7R- and 2S,4S,7R-H4Tyr, respectively. Given that bacilysin has the 2S,4S stereochemistry in its anticapsin moiety, it is likely that the 2S,4S-H4Tyr is the diastereomer used for the biosynthesis. This is Transaminase BacF from Bacillus subtilis (strain 168).